We begin with the raw amino-acid sequence, 603 residues long: Aspartate--tRNA(Asp/Asn) ligase (603 aa).

Positions 205–208 are aspartate; sequence QLFK. Arginine 227 lines the L-aspartate pocket. Residues 227-229 and glutamine 236 contribute to the ATP site; that span reads RDE. Histidine 463 provides a ligand contact to L-aspartate. Glutamate 497 contributes to the ATP binding site. Arginine 504 serves as a coordination point for L-aspartate. An ATP-binding site is contributed by 549–552; sequence GMDR.

The protein belongs to the class-II aminoacyl-tRNA synthetase family. Type 1 subfamily. Homodimer.

It localises to the cytoplasm. It carries out the reaction tRNA(Asx) + L-aspartate + ATP = L-aspartyl-tRNA(Asx) + AMP + diphosphate. Its function is as follows. Aspartyl-tRNA synthetase with relaxed tRNA specificity since it is able to aspartylate not only its cognate tRNA(Asp) but also tRNA(Asn). Reaction proceeds in two steps: L-aspartate is first activated by ATP to form Asp-AMP and then transferred to the acceptor end of tRNA(Asp/Asn). This is Aspartate--tRNA(Asp/Asn) ligase from Anaeromyxobacter dehalogenans (strain 2CP-C).